The chain runs to 90 residues: Progonadoliberin-3 (90 aa).

Positions 1 to 23 are cleaved as a signal peptide; that stretch reads MEANSRVMVRVLLLALVVQVTLS. Gln24 carries the pyrrolidone carboxylic acid modification. Residue Gly33 is modified to Glycine amide. The tract at residues 56 to 90 is disordered; it reads LPEEASAQTQERLRPYNVINDDSSHFDRKKRSPNK.

It belongs to the GnRH family.

The protein localises to the secreted. Functionally, stimulates the secretion of gonadotropins. The chain is Progonadoliberin-3 (gnrh3) from Dicentrarchus labrax (European seabass).